The following is a 142-amino-acid chain: Large ribosomal subunit protein uL16 (142 aa).

The protein belongs to the universal ribosomal protein uL16 family. As to quaternary structure, part of the 50S ribosomal subunit.

In terms of biological role, binds 23S rRNA and is also seen to make contacts with the A and possibly P site tRNAs. This Pseudothermotoga lettingae (strain ATCC BAA-301 / DSM 14385 / NBRC 107922 / TMO) (Thermotoga lettingae) protein is Large ribosomal subunit protein uL16.